The chain runs to 682 residues: Heat shock 70 kDa protein, mitochondrial (682 aa).

A mitochondrion-targeting transit peptide spans 1-57 (MATAALLRSLRRREFATSSISAYRTLASNTKPSWCPSLVGAKWAGLARPFSSKPAGN). The tract at residues 649-682 (GEHMAGGSSGGASGGGGAQGGDQPPEAEYEEVKK) is disordered. Over residues 655–668 (GSSGGASGGGGAQG) the composition is skewed to gly residues. Residues 673–682 (PEAEYEEVKK) show a composition bias toward acidic residues.

Belongs to the heat shock protein 70 family.

The protein resides in the mitochondrion. The chain is Heat shock 70 kDa protein, mitochondrial (HSP68) from Solanum tuberosum (Potato).